We begin with the raw amino-acid sequence, 101 residues long: MGTPELKIILEFSAGAELLFGNIKRRELALDGNQKWTIANLLKWMHANILTERPELFLQGDTVRPGILVLINDTDWELLGELDYELQPNDNVLFISTLHGG.

A 1-thioglycine modification is found at Gly101. Gly101 participates in a covalent cross-link: Glycyl lysine isopeptide (Gly-Lys) (interchain with K-? in acceptor proteins).

Belongs to the URM1 family. In terms of assembly, interacts with cer. Post-translationally, C-terminal thiocarboxylation occurs in 2 steps, it is first acyl-adenylated (-COAMP) via the hesA/moeB/thiF part of the MOCS3 homolog, then thiocarboxylated (-COSH) via the rhodanese domain of the MOCS3 homolog.

The protein localises to the cytoplasm. The protein operates within tRNA modification; 5-methoxycarbonylmethyl-2-thiouridine-tRNA biosynthesis. Acts as a sulfur carrier required for 2-thiolation of mcm(5)S(2)U at tRNA wobble positions of cytosolic tRNA(Lys), tRNA(Glu) and tRNA(Gln). Serves as sulfur donor in tRNA 2-thiolation reaction by being thiocarboxylated (-COSH) at its C-terminus by MOCS3. The sulfur is then transferred to tRNA to form 2-thiolation of mcm(5)S(2)U. Also acts as a ubiquitin-like protein (UBL) that is covalently conjugated via an isopeptide bond to lysine residues of target proteins such as Prx2/Jafrac1, Ciao1, Eip71CD and GILT1. The thiocarboxylated form serves as substrate for conjugation and oxidative stress specifically induces the formation of UBL-protein conjugates. The polypeptide is Ubiquitin-related modifier 1 homolog (Drosophila erecta (Fruit fly)).